The chain runs to 482 residues: Complement C1r subcomponent-like protein (482 aa).

Residues 1–43 (MSGFRGLVPELENSLWSSPTTSCMSKMCWWLLWGILHTCPTQA) form the signal peptide. In terms of domain architecture, CUB spans 44 to 166 (SVLLAQQSPQ…KGFLALYQAV (123 aa)). Intrachain disulfides connect Cys97–Cys115 and Cys190–Cys223. Residues 166-225 (VAVNQPNGDTEAVTTPGAPKIQNHCQDPYYKADQTGTLSCPSSWKWKDRQDGGEVPECVP) form the Sushi domain. One can recognise a Peptidase S1 domain in the interval 240–479 (TFGSSRAKLG…YMDWIKRVIE (240 aa)). Residues His278 and Asp334 each act as charge relay system in the active site. N-linked (GlcNAc...) asparagine glycosylation is present at Asn358. Intrachain disulfides connect Cys397-Cys416 and Cys427-Cys457. Ser431 acts as the Charge relay system in catalysis.

Belongs to the peptidase S1 family. In terms of tissue distribution, expressed in liver (at protein level).

The protein resides in the secreted. In terms of biological role, mediates the proteolytic cleavage of HP/haptoglobin in the endoplasmic reticulum. The sequence is that of Complement C1r subcomponent-like protein (C1rl) from Mus musculus (Mouse).